Consider the following 705-residue polypeptide: Polyribonucleotide nucleotidyltransferase (705 aa).

Mg(2+) contacts are provided by aspartate 486 and aspartate 492. Positions 553–612 (PRIYTMKINPEKIKDVIGKGGSVIRALTDETGTTIEIEDDGTIKIAATDGDKAKHAIRRI) constitute a KH domain. The 69-residue stretch at 622 to 690 (GRIYAGKVTR…RQGRIRLSIK (69 aa)) folds into the S1 motif domain.

The protein belongs to the polyribonucleotide nucleotidyltransferase family. As to quaternary structure, component of the RNA degradosome, which is a multiprotein complex involved in RNA processing and mRNA degradation. Mg(2+) serves as cofactor.

The protein localises to the cytoplasm. The enzyme catalyses RNA(n+1) + phosphate = RNA(n) + a ribonucleoside 5'-diphosphate. Functionally, involved in mRNA degradation. Catalyzes the phosphorolysis of single-stranded polyribonucleotides processively in the 3'- to 5'-direction. The chain is Polyribonucleotide nucleotidyltransferase from Yersinia pseudotuberculosis serotype O:3 (strain YPIII).